A 360-amino-acid polypeptide reads, in one-letter code: Phospho-N-acetylmuramoyl-pentapeptide-transferase (360 aa).

10 helical membrane passes run 3 to 23 (SILV…PYLI), 52 to 72 (MGGV…HLTV), 81 to 101 (GLLV…DDFI), 115 to 135 (AKLV…MQFA), 153 to 173 (ITVI…AISG), 187 to 207 (LAGG…FWQF), 230 to 250 (IALV…WNAA), 254 to 274 (IFMG…LSMV), 282 to 302 (IIIG…IVVF), and 333 to 353 (FWVL…ADWL).

This sequence belongs to the glycosyltransferase 4 family. MraY subfamily. Requires Mg(2+) as cofactor.

It is found in the cell membrane. It catalyses the reaction UDP-N-acetyl-alpha-D-muramoyl-L-alanyl-gamma-D-glutamyl-meso-2,6-diaminopimeloyl-D-alanyl-D-alanine + di-trans,octa-cis-undecaprenyl phosphate = di-trans,octa-cis-undecaprenyl diphospho-N-acetyl-alpha-D-muramoyl-L-alanyl-D-glutamyl-meso-2,6-diaminopimeloyl-D-alanyl-D-alanine + UMP. It participates in cell wall biogenesis; peptidoglycan biosynthesis. Its function is as follows. Catalyzes the initial step of the lipid cycle reactions in the biosynthesis of the cell wall peptidoglycan: transfers peptidoglycan precursor phospho-MurNAc-pentapeptide from UDP-MurNAc-pentapeptide onto the lipid carrier undecaprenyl phosphate, yielding undecaprenyl-pyrophosphoryl-MurNAc-pentapeptide, known as lipid I. The chain is Phospho-N-acetylmuramoyl-pentapeptide-transferase from Saccharopolyspora erythraea (strain ATCC 11635 / DSM 40517 / JCM 4748 / NBRC 13426 / NCIMB 8594 / NRRL 2338).